The chain runs to 349 residues: MSKKKLSKGQQRRVSANHQRRLKKTESKVEWEDSQLGDAQEGIIISRFGMHADVEATDGVVRRCNIRRTISSLVTGDRVVWRPGHESLAGISGIVEAVHPRHSVLTRPDYYDGIKPIAANIDQIVIVSAILPELSLNIIDRYLVACETLEVEPLIVLNKIDLLDEKSRQLVDKSMDIYRALKYRVLMVSSHTQQGIPELEQALTDRISIFAGQSGVGKSSLLNALLALGEKRILVNEVSDNSGLGQHTTTASRLYHFPHGGDVIDSPGVREFGLWHLEPEQVTSGFIELREYIGSCKFRDCKHENDPGCAINAARERGDIARERFDNYHRILESMTQVKMRKGFSDTDN.

Over residues 1–11 the composition is skewed to basic residues; sequence MSKKKLSKGQQ. A disordered region spans residues 1 to 29; the sequence is MSKKKLSKGQQRRVSANHQRRLKKTESKV. The region spanning 102 to 272 is the CP-type G domain; that stretch reads HSVLTRPDYY…VIDSPGVREF (171 aa). GTP is bound by residues 158-161 and 212-220; these read NKID and GQSGVGKSS. The Zn(2+) site is built by C296, C301, H303, and C309.

It belongs to the TRAFAC class YlqF/YawG GTPase family. RsgA subfamily. In terms of assembly, monomer. Associates with 30S ribosomal subunit, binds 16S rRNA. It depends on Zn(2+) as a cofactor.

Its subcellular location is the cytoplasm. Functionally, one of several proteins that assist in the late maturation steps of the functional core of the 30S ribosomal subunit. Helps release RbfA from mature subunits. May play a role in the assembly of ribosomal proteins into the subunit. Circularly permuted GTPase that catalyzes slow GTP hydrolysis, GTPase activity is stimulated by the 30S ribosomal subunit. This Pectobacterium atrosepticum (strain SCRI 1043 / ATCC BAA-672) (Erwinia carotovora subsp. atroseptica) protein is Small ribosomal subunit biogenesis GTPase RsgA.